The sequence spans 111 residues: UPF0060 membrane protein xcc-b100_1273 (111 aa).

The next 4 helical transmembrane spans lie at 8-28, 34-54, 62-82, and 91-111; these read LLLFVATAVAELVGCYLPYLW, SVWLLLPAALSLAVFVWLLTL, VYAAYGGVYIATALLWLWWVD, and LLGAGCCLLGMAIIMFSPRSG.

Belongs to the UPF0060 family.

It is found in the cell inner membrane. In Xanthomonas campestris pv. campestris (strain B100), this protein is UPF0060 membrane protein xcc-b100_1273.